We begin with the raw amino-acid sequence, 274 residues long: Coagulation factor IX (274 aa).

Tyrosine 23 carries the sulfotyrosine modification. Asparagine 25 is a glycosylation site (N-linked (GlcNAc...) asparagine). Serine 26 carries the phosphoserine modification. Asparagine 35 is a glycosylation site (N-linked (GlcNAc...) asparagine). O-linked (GalNAc...) threonine glycosylation occurs at threonine 37. Asparagine 40 carries an N-linked (GlcNAc...) asparagine glycan. Positions 49 to 274 (VVGGEDAARG…IYTKVSRYEV (226 aa)) constitute a Peptidase S1 domain. Cysteine 74 and cysteine 90 are joined by a disulfide. Residue histidine 89 is the Charge relay system of the active site. Positions 103, 105, 110, and 113 each coordinate Ca(2+). Asparagine 128 is a glycosylation site (N-linked (GlcNAc...) asparagine). Aspartate 137 acts as the Charge relay system in catalysis. 2 disulfide bridges follow: cysteine 204/cysteine 218 and cysteine 229/cysteine 257. The Charge relay system role is filled by serine 233.

Belongs to the peptidase S1 family. In terms of assembly, heterodimer of a light chain and a heavy chain; disulfide-linked. Interacts (inactive and activated) with F11 (activated) in calcium-dependent manner. Interacts with SERPINC1. Post-translationally, activated by factor XIa, which excises the activation peptide. The propeptide can also be removed by snake venom protease. Activated by coagulation factor VIIa-tissue factor (F7-F3) complex in calcium-dependent manner.

It localises to the secreted. The catalysed reaction is Selective cleavage of Arg-|-Ile bond in factor X to form factor Xa.. Factor IX is a vitamin K-dependent plasma protein that participates in the intrinsic pathway of blood coagulation by converting factor X to its active form in the presence of Ca(2+) ions, phospholipids, and factor VIIIa. The sequence is that of Coagulation factor IX (F9) from Ovis aries (Sheep).